Reading from the N-terminus, the 1942-residue chain is Myosin-1 (1942 aa).

In terms of domain architecture, Myosin N-terminal SH3-like spans 33 to 82 (DAKSSVFVVDAKESFVKATVQSREGGKVTAKTEGGTTVTVKDDQVYPMNP). Serine 36 carries the phosphoserine modification. Threonine 64 and threonine 69 each carry phosphothreonine. Residues 86-785 (DKIEDMAMMT…LLGLLEEMRD (700 aa)) form the Myosin motor domain. Residue lysine 130 is modified to N6,N6,N6-trimethyllysine. An ATP-binding site is contributed by 179–186 (GESGAGKT). Phosphotyrosine is present on tyrosine 389. Threonine 419 is modified (phosphothreonine). Residue tyrosine 424 is modified to Phosphotyrosine. Serine 625 carries the phosphoserine modification. An actin-binding region spans residues 662–684 (LNKLMTNLRSTHPHFVRCIIPNE). Histidine 760 is modified (pros-methylhistidine). Positions 764 to 778 (KFGHTKVFFKAGLLG) are actin-binding. The IQ domain maps to 788-817 (LAQLITRTQAMCRGYLARVEYQKMVERRES). A coiled-coil region spans residues 846 to 1942 (LLKSAETEKE…EVHTKIISEE (1097 aa)). 5 positions are modified to phosphoserine: serine 1095, serine 1099, serine 1165, serine 1240, and serine 1246. The disordered stretch occupies residues 1156–1175 (RLEEAGGATSAQIEMNKKRE). At threonine 1258 the chain carries Phosphothreonine. Serine 1264 carries the phosphoserine modification. Phosphothreonine occurs at positions 1268 and 1289. Phosphoserine occurs at positions 1291, 1295, 1306, and 1309. Tyrosine 1467 bears the Phosphotyrosine mark. Position 1470 is a phosphothreonine (threonine 1470). Serine 1477 carries the phosphoserine modification. The residue at position 1495 (tyrosine 1495) is a Phosphotyrosine. Serine 1498 carries the post-translational modification Phosphoserine. Threonine 1504 is modified (phosphothreonine). Position 1517 is a phosphoserine (serine 1517). The residue at position 1520 (threonine 1520) is a Phosphothreonine. Phosphoserine occurs at positions 1545, 1557, 1577, 1603, 1606, 1717, and 1729. Residues threonine 1733 and threonine 1739 each carry the phosphothreonine modification. Serine 1742 carries the phosphoserine modification.

Belongs to the TRAFAC class myosin-kinesin ATPase superfamily. Myosin family. As to quaternary structure, muscle myosin is a hexameric protein that consists of 2 heavy chain subunits (MHC), 2 alkali light chain subunits (MLC) and 2 regulatory light chain subunits (MLC-2). Interacts with SLC26A5. As to expression, expressed in the cochlea (at protein level). Strongly expressed in spiral ganglion neurons with axonal sprouts and supporting cells around hair cells. In the organ of Corti, it is expressed in inner and outer hair cells, and in supporting cells.

It is found in the cytoplasm. The protein localises to the myofibril. Required for normal hearing. It plays a role in cochlear amplification of auditory stimuli, likely through the positive regulation of prestin (SLC26A5) activity and outer hair cell (OHC) electromotility. This is Myosin-1 from Mus musculus (Mouse).